Here is a 289-residue protein sequence, read N- to C-terminus: tRNA pseudouridine synthase B (289 aa).

D38 (nucleophile) is an active-site residue.

It belongs to the pseudouridine synthase TruB family. Type 1 subfamily.

It carries out the reaction uridine(55) in tRNA = pseudouridine(55) in tRNA. Responsible for synthesis of pseudouridine from uracil-55 in the psi GC loop of transfer RNAs. In Clostridium tetani (strain Massachusetts / E88), this protein is tRNA pseudouridine synthase B.